Reading from the N-terminus, the 299-residue chain is Pectin lyase (299 aa).

Residues 1–18 (MKFSTFVSLGLTAITALA) form the signal peptide. Low complexity-rich tracts occupy residues 82 to 91 (RSAATSPSSD) and 232 to 246 (SASAQATSTTTTTRT). Disordered stretches follow at residues 82-105 (RSAATSPSSDRTARSCLRTSPSPS) and 227-246 (SRGRPSASAQATSTTTTTRT).

It belongs to the polysaccharide lyase 1 family.

The protein localises to the secreted. It catalyses the reaction Eliminative cleavage of (1-&gt;4)-alpha-D-galacturonan methyl ester to give oligosaccharides with 4-deoxy-6-O-methyl-alpha-D-galact-4-enuronosyl groups at their non-reducing ends.. This Peyronellaea pinodes (Pea foot rot fungus) protein is Pectin lyase (PELA).